An 85-amino-acid polypeptide reads, in one-letter code: Beta-insect depressant toxin Lqh-dprIT3h (85 aa).

The N-terminal stretch at 1 to 21 is a signal peptide; the sequence is MKLLLLLTISASMLIEGLVNA. One can recognise an LCN-type CS-alpha/beta domain in the interval 22–82; that stretch reads DGYIRGGDGC…EWDYETDTCG (61 aa). 4 cysteine pairs are disulfide-bonded: Cys31–Cys81, Cys35–Cys56, Cys42–Cys63, and Cys46–Cys65. A Glycine amide modification is found at Gly82.

This sequence belongs to the long (4 C-C) scorpion toxin superfamily. Sodium channel inhibitor family. Beta subfamily. In terms of tissue distribution, expressed by the venom gland.

Its subcellular location is the secreted. Depressant insect beta-toxins cause a transient contraction paralysis followed by a slow flaccid paralysis. They bind voltage-independently at site-4 of sodium channels (Nav) and block action potentials, primarily by depolarizing the axonal membrane and suppressing the sodium current. This depressant toxin is active only on insects. It is found in a relatively small amount in the venom. This Leiurus hebraeus (Hebrew deathstalker scorpion) protein is Beta-insect depressant toxin Lqh-dprIT3h.